We begin with the raw amino-acid sequence, 245 residues long: Malonyl-[acyl-carrier protein] O-methyltransferase (245 aa).

It belongs to the methyltransferase superfamily.

It carries out the reaction malonyl-[ACP] + S-adenosyl-L-methionine = malonyl-[ACP] methyl ester + S-adenosyl-L-homocysteine. Its pathway is cofactor biosynthesis; biotin biosynthesis. Functionally, converts the free carboxyl group of a malonyl-thioester to its methyl ester by transfer of a methyl group from S-adenosyl-L-methionine (SAM). It allows to synthesize pimeloyl-ACP via the fatty acid synthetic pathway. The protein is Malonyl-[acyl-carrier protein] O-methyltransferase of Calditerrivibrio nitroreducens (strain DSM 19672 / NBRC 101217 / Yu37-1).